We begin with the raw amino-acid sequence, 528 residues long: Bifunctional purine biosynthesis protein PurH (528 aa).

The 146-residue stretch at Met1–Thr146 folds into the MGS-like domain.

Belongs to the PurH family.

It catalyses the reaction (6R)-10-formyltetrahydrofolate + 5-amino-1-(5-phospho-beta-D-ribosyl)imidazole-4-carboxamide = 5-formamido-1-(5-phospho-D-ribosyl)imidazole-4-carboxamide + (6S)-5,6,7,8-tetrahydrofolate. The catalysed reaction is IMP + H2O = 5-formamido-1-(5-phospho-D-ribosyl)imidazole-4-carboxamide. Its pathway is purine metabolism; IMP biosynthesis via de novo pathway; 5-formamido-1-(5-phospho-D-ribosyl)imidazole-4-carboxamide from 5-amino-1-(5-phospho-D-ribosyl)imidazole-4-carboxamide (10-formyl THF route): step 1/1. It participates in purine metabolism; IMP biosynthesis via de novo pathway; IMP from 5-formamido-1-(5-phospho-D-ribosyl)imidazole-4-carboxamide: step 1/1. In Synechococcus sp. (strain WH7803), this protein is Bifunctional purine biosynthesis protein PurH.